A 583-amino-acid polypeptide reads, in one-letter code: MVRHADTPTDAQRAREQFLSTGALQPDAVASSVLNSWQRSRELHVHPDRVELPYVRDPDTDTPLMHAAAPVLRRMAEDLSDQSVSVVLTSADGLVLDRVAADTEFERVLDDVRLARGYSYAEEFAGTNGIGTALETGRPAFIRGSEHYVGTLGGLACAGSPIREPVTRRILGVIDLTCRARQADPLLFVLAKSAGSQIEDRLRTMNNETETALLDAYLKQSRRYPGGVLAIGGDVVLMNRYLRQALDAADQTVLLDHAAELTRSSFTSTTVAHLPSGASVKISAAERIIVGVRSDSVVFHVSVHVAESIPVRSSQHIPRLAGQSSSFRRSAQQVERCYRDREWVVIEGERGSGRTYLGYSVVHFVTPERSIPVLHIDNFDTPESFVAAFESETDSADFAVIVSDVDELPDEVLNPMAAIMQTRAGRGWIAATTSTERDSQLVDLLMLPFFTHTVTVPALRHRIEDLQELVPMILNELSRGEARMDGEAMRQLAKLPWPGNIAQLRHVLTETVRRQRSGVIGVDKLPAECRSVTRRKLTPLEAMERDAIVRSLLENDGNKADAAAALGMSRATIYRKIKDFGIA.

Residues 320-513 enclose the Sigma-54 factor interaction domain; sequence LAGQSSSFRR…LRHVLTETVR (194 aa). ATP-binding positions include 349–356 and 395–404; these read ERGSGRTY and SADFAVIVSD.

In terms of biological role, acts as a transcriptional activator of the mimABCD operon encoding the propane 2-monooxygenase complex. This Mycolicibacterium smegmatis (strain ATCC 700084 / mc(2)155) (Mycobacterium smegmatis) protein is Propane 2-monooxygenase operon transcriptional activator MimR.